We begin with the raw amino-acid sequence, 395 residues long: Elongation factor Tu (395 aa).

Residues 10-204 enclose the tr-type G domain; the sequence is KPHVNIGTIG…VVDEYIPTPV (195 aa). A G1 region spans residues 19–26; the sequence is GHVDHGKT. Residue 19–26 coordinates GTP; sequence GHVDHGKT. Thr-26 is a Mg(2+) binding site. Residues 60-64 are G2; it reads GITIN. Positions 81–84 are G3; sequence DAPG. Residues 81-85 and 136-139 each bind GTP; these read DAPGH and NKTD. The G4 stretch occupies residues 136–139; sequence NKTD. Positions 174 to 176 are G5; the sequence is SAL.

It belongs to the TRAFAC class translation factor GTPase superfamily. Classic translation factor GTPase family. EF-Tu/EF-1A subfamily. Monomer.

Its subcellular location is the cytoplasm. It carries out the reaction GTP + H2O = GDP + phosphate + H(+). Its function is as follows. GTP hydrolase that promotes the GTP-dependent binding of aminoacyl-tRNA to the A-site of ribosomes during protein biosynthesis. The polypeptide is Elongation factor Tu (Lactiplantibacillus plantarum (strain ATCC BAA-793 / NCIMB 8826 / WCFS1) (Lactobacillus plantarum)).